A 457-amino-acid chain; its full sequence is Protein PIN-LIKES 2 (457 aa).

The Lumenal portion of the chain corresponds to 1–15; the sequence is MSGFSSGNVNSRVVD. A helical membrane pass occupies residues 16-36; that stretch reads ILSGVVPLLKLICLTVIGLLL. Over 37-54 the chain is Cytoplasmic; the sequence is AHPKTQLVPRATFRLLSK. Residues 55–75 traverse the membrane as a helical segment; sequence LVFALFLPCLIFTELGESITL. Residues 76 to 85 are Lumenal-facing; that stretch reads DNIVQWWFIP. A helical membrane pass occupies residues 86 to 106; that stretch reads VNVLLSAVVGSLIGYLVVLIC. Residues 107–116 are Cytoplasmic-facing; it reads RPPPEFNRFT. A helical transmembrane segment spans residues 117-137; it reads IVMTAFGNTGNLLLAIVSSVC. At 138–151 the chain is on the lumenal side; the sequence is HTKTNPFGPNCNSR. The chain crosses the membrane as a helical span at residues 152-172; sequence GVSYVSFAQWVAVILVYTVVY. The Cytoplasmic segment spans residues 173–291; that stretch reads HMMEPPLEYY…PVKHILQPPT (119 aa). A helical membrane pass occupies residues 292–312; sequence IASLLAIIIGSVPQLKSVVFG. Residues 313 to 322 are Lumenal-facing; that stretch reads YDAPLSFITD. Residues 323–343 form a helical membrane-spanning segment; sequence SLNIMGSAMVPSVMLVLGGML. The Cytoplasmic portion of the chain corresponds to 344-356; that stretch reads SEGPNESTLGLRT. A helical membrane pass occupies residues 357 to 377; the sequence is TIGISVARLLVLPLVGIGIVM. Over 378–393 the chain is Lumenal; sequence SADKLGLISSADPMFK. A helical membrane pass occupies residues 394–414; the sequence is FVLLLQYSTPSAILLGAIASL. Over 415-424 the chain is Cytoplasmic; that stretch reads RGYAVREASA. The chain crosses the membrane as a helical span at residues 425–445; it reads LLFWQHIFALLSLTFYIVIFF. The Lumenal segment spans residues 446 to 457; it reads KLTVETTVQGMQ.

This sequence belongs to the auxin efflux carrier (TC 2.A.69.2) family. As to expression, expressed in seedlings, rosette and cauline leaves, flowers and siliques.

Its subcellular location is the endoplasmic reticulum membrane. Its function is as follows. Involved in cellular auxin homeostasis by regulating auxin metabolism. Regulates intracellular auxin accumulation at the endoplasmic reticulum and thus auxin availability for nuclear auxin signaling. The sequence is that of Protein PIN-LIKES 2 from Arabidopsis thaliana (Mouse-ear cress).